The following is a 236-amino-acid chain: MDAVLYSVPLSFTPLRASSSPSSPYLLLPRFLSVQPCHKFTFSRSFPSKSRIPSASSAAGSTLMTNSSSPRSGVYTVGEFMTKKEDLHVVKPTTTVDEALELLVENRITGFPVIDEDWKLVGLVSDYDLLALDSISGSGRTENSMFPEVDSTWKTFNAVQKLLSKTNGKLVGDLMTPAPLVVEEKTNLEDAAKILLETKYRRLPVVDSDGKLVGIITRGNVVRAALQIKRSGDRNA.

A chloroplast-targeting transit peptide spans 1 to 53 (MDAVLYSVPLSFTPLRASSSPSSPYLLLPRFLSVQPCHKFTFSRSFPSKSRIP). The tract at residues 47–66 (PSKSRIPSASSAAGSTLMTN) is disordered. S54 carries the post-translational modification N-acetylserine. 2 consecutive CBS domains span residues 81–142 (MTKK…GRTE) and 175–231 (MTPA…IKRS).

The protein resides in the plastid. It is found in the chloroplast. In Arabidopsis thaliana (Mouse-ear cress), this protein is CBS domain-containing protein CBSX1, chloroplastic (CBSX1).